A 131-amino-acid chain; its full sequence is MDTTTSNPRIEASAKYIRMSPHKARRVVDQIRGRAYEQAPMILEFMPYRVCDSISQLLSSAAANANHNFGLSKTDLFIDAIQVDGGSFLKRIRSGARGRTYPIHKPTCHITIVMRMDSGWRNKISLRRFGK.

This sequence belongs to the universal ribosomal protein uL22 family. As to quaternary structure, part of the 50S ribosomal subunit.

The protein localises to the plastid. In terms of biological role, this protein binds specifically to 23S rRNA. The globular domain of the protein is located near the polypeptide exit tunnel on the outside of the subunit, while an extended beta-hairpin is found that lines the wall of the exit tunnel in the center of the 70S ribosome. This chain is Large ribosomal subunit protein uL22c (rpl22), found in Aneura mirabilis (Parasitic liverwort).